The chain runs to 217 residues: tRNA (guanine-N(7)-)-methyltransferase (217 aa).

S-adenosyl-L-methionine contacts are provided by glutamate 44, aspartate 69, aspartate 96, and aspartate 118. Residue aspartate 118 is part of the active site. Lysine 122 is a binding site for substrate. The interaction with RNA stretch occupies residues 124-129 (RHEKRR). Substrate-binding positions include aspartate 154 and 193 to 196 (TEYE).

It belongs to the class I-like SAM-binding methyltransferase superfamily. TrmB family.

The catalysed reaction is guanosine(46) in tRNA + S-adenosyl-L-methionine = N(7)-methylguanosine(46) in tRNA + S-adenosyl-L-homocysteine. It participates in tRNA modification; N(7)-methylguanine-tRNA biosynthesis. Functionally, catalyzes the formation of N(7)-methylguanine at position 46 (m7G46) in tRNA. The sequence is that of tRNA (guanine-N(7)-)-methyltransferase from Lactococcus lactis subsp. lactis (strain IL1403) (Streptococcus lactis).